The sequence spans 167 residues: NADH-quinone oxidoreductase subunit B 1 (167 aa).

Cys38, Cys39, Cys104, and Cys133 together coordinate [4Fe-4S] cluster.

Belongs to the complex I 20 kDa subunit family. As to quaternary structure, NDH-1 is composed of 14 different subunits. Subunits NuoB, C, D, E, F, and G constitute the peripheral sector of the complex. It depends on [4Fe-4S] cluster as a cofactor.

It is found in the cell membrane. It catalyses the reaction a quinone + NADH + 5 H(+)(in) = a quinol + NAD(+) + 4 H(+)(out). In terms of biological role, NDH-1 shuttles electrons from NADH, via FMN and iron-sulfur (Fe-S) centers, to quinones in the respiratory chain. The immediate electron acceptor for the enzyme in this species is believed to be ubiquinone. Couples the redox reaction to proton translocation (for every two electrons transferred, four hydrogen ions are translocated across the cytoplasmic membrane), and thus conserves the redox energy in a proton gradient. In Roseiflexus castenholzii (strain DSM 13941 / HLO8), this protein is NADH-quinone oxidoreductase subunit B 1.